Here is a 403-residue protein sequence, read N- to C-terminus: Tyrosine--tRNA ligase (403 aa).

Positions 42–51 match the 'HIGH' region motif; sequence PTAPDLHLGH. The 'KMSKS' region motif lies at 226–230; sequence KMSKS. Lysine 229 provides a ligand contact to ATP. The S4 RNA-binding domain maps to 336 to 396; that stretch reads MPISAVLNKA…GKKAFGRITL (61 aa).

It belongs to the class-I aminoacyl-tRNA synthetase family. TyrS type 2 subfamily. Homodimer.

It is found in the cytoplasm. It carries out the reaction tRNA(Tyr) + L-tyrosine + ATP = L-tyrosyl-tRNA(Tyr) + AMP + diphosphate + H(+). In terms of biological role, catalyzes the attachment of tyrosine to tRNA(Tyr) in a two-step reaction: tyrosine is first activated by ATP to form Tyr-AMP and then transferred to the acceptor end of tRNA(Tyr). The sequence is that of Tyrosine--tRNA ligase from Pseudomonas syringae pv. tomato (strain ATCC BAA-871 / DC3000).